Consider the following 224-residue polypeptide: Phosphoribosylformylglycinamidine synthase subunit PurQ (224 aa).

In terms of domain architecture, Glutamine amidotransferase type-1 spans 4 to 224 (RIGIITFPGT…YSVLDGVLAG (221 aa)). Cys87 functions as the Nucleophile in the catalytic mechanism. Active-site residues include His195 and Glu197.

As to quaternary structure, part of the FGAM synthase complex composed of 1 PurL, 1 PurQ and 2 PurS subunits.

The protein resides in the cytoplasm. The catalysed reaction is N(2)-formyl-N(1)-(5-phospho-beta-D-ribosyl)glycinamide + L-glutamine + ATP + H2O = 2-formamido-N(1)-(5-O-phospho-beta-D-ribosyl)acetamidine + L-glutamate + ADP + phosphate + H(+). It catalyses the reaction L-glutamine + H2O = L-glutamate + NH4(+). The protein operates within purine metabolism; IMP biosynthesis via de novo pathway; 5-amino-1-(5-phospho-D-ribosyl)imidazole from N(2)-formyl-N(1)-(5-phospho-D-ribosyl)glycinamide: step 1/2. In terms of biological role, part of the phosphoribosylformylglycinamidine synthase complex involved in the purines biosynthetic pathway. Catalyzes the ATP-dependent conversion of formylglycinamide ribonucleotide (FGAR) and glutamine to yield formylglycinamidine ribonucleotide (FGAM) and glutamate. The FGAM synthase complex is composed of three subunits. PurQ produces an ammonia molecule by converting glutamine to glutamate. PurL transfers the ammonia molecule to FGAR to form FGAM in an ATP-dependent manner. PurS interacts with PurQ and PurL and is thought to assist in the transfer of the ammonia molecule from PurQ to PurL. The protein is Phosphoribosylformylglycinamidine synthase subunit PurQ of Mycolicibacterium paratuberculosis (strain ATCC BAA-968 / K-10) (Mycobacterium paratuberculosis).